The following is a 402-amino-acid chain: Protein indeterminate-domain 12 (402 aa).

The tract at residues 47–66 is disordered; it reads TETHKPKKKRGLPGNPDPDA. S72 carries the post-translational modification Phosphoserine. 2 consecutive C2H2-type zinc fingers follow at residues 82–104 and 124–154; these read FVCE…RRGH and YVCP…CRKH. The Nuclear localization signal motif lies at 146–153; that stretch reads IKKHFCRK. The segment at 159-183 adopts a C2H2-type 2; degenerate zinc-finger fold; it reads WKCEKCSKFYAVQSDWKAHTKICGT. C161, C164, H177, C181, C188, C190, H203, and C207 together coordinate Zn(2+). The CCHC-type 2; atypical zinc finger occupies 186-209; that stretch reads YRCDCGTLFSRKDTFITHRAFCDA. The interval 196–208 is SHR-binding; it reads RKDTFITHRAFCD.

The protein resides in the nucleus. Its function is as follows. Probable transcription factor. The sequence is that of Protein indeterminate-domain 12 from Arabidopsis thaliana (Mouse-ear cress).